The sequence spans 271 residues: MSQPQLTQEALAREAALPENLWIQCPYCKQGSYRESLGNAQVCPHCHYGFRITAKKRLSLIATATEEWDADLVTSDPLDFPGYTEKLAAGQAATGLKDSVWTGQATIGGQSCALGIMDPKFMMGSLGTVTGERLTRLFEKATSANLAVVLFCASGGARMQEGIHSLMQMAKVSAAVKAHSNAGLLFISVLTDPTMGGVTASFAMQGDITLAEPHSLIGFAGRRVIEQTINQKLPQNFQRAETLLQSGFIDAVVQRQDQPSYLGDLLALHTA.

In terms of domain architecture, CoA carboxyltransferase N-terminal spans L21–A271. C25, C28, C43, and C46 together coordinate Zn(2+). The C4-type zinc-finger motif lies at C25–C46.

Belongs to the AccD/PCCB family. As to quaternary structure, acetyl-CoA carboxylase is a heterohexamer composed of biotin carboxyl carrier protein (AccB), biotin carboxylase (AccC) and two subunits each of ACCase subunit alpha (AccA) and ACCase subunit beta (AccD). It depends on Zn(2+) as a cofactor.

Its subcellular location is the cytoplasm. The catalysed reaction is N(6)-carboxybiotinyl-L-lysyl-[protein] + acetyl-CoA = N(6)-biotinyl-L-lysyl-[protein] + malonyl-CoA. It participates in lipid metabolism; malonyl-CoA biosynthesis; malonyl-CoA from acetyl-CoA: step 1/1. In terms of biological role, component of the acetyl coenzyme A carboxylase (ACC) complex. Biotin carboxylase (BC) catalyzes the carboxylation of biotin on its carrier protein (BCCP) and then the CO(2) group is transferred by the transcarboxylase to acetyl-CoA to form malonyl-CoA. The sequence is that of Acetyl-coenzyme A carboxylase carboxyl transferase subunit beta from Lacticaseibacillus paracasei (strain ATCC 334 / BCRC 17002 / CCUG 31169 / CIP 107868 / KCTC 3260 / NRRL B-441) (Lactobacillus paracasei).